A 166-amino-acid chain; its full sequence is Signal peptidase complex catalytic subunit SEC11 (166 aa).

The Cytoplasmic portion of the chain corresponds to 1–9 (MNIRQQLTQ). The helical; Signal-anchor for type II membrane protein transmembrane segment at 10–30 (FLSLAYVFTSAFVIWKSLGII) threads the bilayer. The Lumenal segment spans residues 31 to 166 (TNSHSPIVVV…MCISTLLTNE (136 aa)). Active-site charge relay system residues include Ser44, His83, and Asp108. The interval 152 to 163 (GMLGLMCISTLL) is C-terminal short (CTS) helix.

The protein belongs to the peptidase S26B family. As to quaternary structure, component of the signal peptidase complex (SPC) composed of a catalytic subunit SEC11 and three accessory subunits SPC1, SPC2 and SPC3. The complex induces a local thinning of the ER membrane which is used to measure the length of the signal peptide (SP) h-region of protein substrates. This ensures the selectivity of the complex towards h-regions shorter than 18-20 amino acids. SPC associates with the translocon complex.

It localises to the endoplasmic reticulum membrane. It catalyses the reaction Cleavage of hydrophobic, N-terminal signal or leader sequences from secreted and periplasmic proteins.. Its function is as follows. Catalytic component of the signal peptidase complex (SPC) which catalyzes the cleavage of N-terminal signal sequences from nascent proteins as they are translocated into the lumen of the endoplasmic reticulum. Specifically cleaves N-terminal signal peptides that contain a hydrophobic alpha-helix (h-region) shorter than 18-20 amino acids. This is Signal peptidase complex catalytic subunit SEC11 (SEC11) from Scheffersomyces stipitis (strain ATCC 58785 / CBS 6054 / NBRC 10063 / NRRL Y-11545) (Yeast).